The sequence spans 160 residues: Transcription elongation factor GreB (160 aa).

The protein belongs to the GreA/GreB family. GreB subfamily.

Its function is as follows. Necessary for efficient RNA polymerase transcription elongation past template-encoded arresting sites. The arresting sites in DNA have the property of trapping a certain fraction of elongating RNA polymerases that pass through, resulting in locked ternary complexes. Cleavage of the nascent transcript by cleavage factors such as GreA or GreB allows the resumption of elongation from the new 3'terminus. GreB releases sequences of up to 9 nucleotides in length. The sequence is that of Transcription elongation factor GreB from Vibrio vulnificus (strain CMCP6).